The chain runs to 424 residues: MSYVIDRRLNGKNKSTVNRQRFLRRYRDHIKKAVEEAVSRRSITDMEHGEQISIPGRDIDEPVLHHGRGGKQTVVHPGNKEFTAGEHIARPQGGGGGGGGRGKAGNSGEGMDEFVFQITQEEFLEFMFEDLELPNLVKRNLTGTDTFKTVRAGISNEGNPARINIIRTLRSAHARRIALSGSSRAKLREAKEELARLKREEPDNFGDIQELEAEIERLSARIHRVPFLDTFDLKYNLLVKQPNPSSKAVMFCLMDVSGSMTQATKDIAKRFFILLYLFLKRNYDKIDVVFIRHHTSAREVDEEEFFYSRETGGTIVSSALKLMQEIMAERYPSNEWNIYAAQASDGDNWNDDSPICRDILINQIMPFVQYYTYVEITPREHQALWFEYERIAEAFSDTFAQQQLVSAGDIYPVFRELFQRRLVT.

The segment at 85–108 (GEHIARPQGGGGGGGGRGKAGNSG) is disordered. A compositionally biased stretch (gly residues) spans 92–108 (QGGGGGGGGRGKAGNSG).

This sequence belongs to the UPF0229 family.

The protein is UPF0229 protein PFL_5654 of Pseudomonas fluorescens (strain ATCC BAA-477 / NRRL B-23932 / Pf-5).